A 421-amino-acid polypeptide reads, in one-letter code: Protein HOMOLOG OF MAMMALIAN LYST-INTERACTING PROTEIN 5 (421 aa).

The residue at position 2 (S2) is an N-acetylserine. Residues 146–374 (IKEGRKPTPG…KYHYDSSYQP (229 aa)) are disordered. Polar residues predominate over residues 165–185 (SIPSSGPSGSYDHSASDTNTT). Residues 188–207 (HRTELDPPHDSNDDSSHHQF) are compositionally biased toward basic and acidic residues. Over residues 245–258 (LPPPTGPSDSPYPH) the composition is skewed to pro residues. Positions 278-293 (NYSSHEPSPNSLPNFQ) are enriched in polar residues. 2 stretches are compositionally biased toward low complexity: residues 294–308 (SYPS…STSP) and 317–337 (PEPY…SFSS).

This sequence belongs to the VTA1 family. Homodimer. Interacts with SKD1/VPS4, VPS60-1, CHMP1A and CHMP1B. Binds to PROS/At4g24370. Interacts with MPK6 and MPK3. Post-translationally, phosphorylated by activated MPK6 and MPK3, this activation is required to trigger multivesicular bodies (MVBs) trafficking upon plant infection.

Its subcellular location is the cytoplasm. The protein resides in the endosome membrane. The protein localises to the nucleus. It localises to the endosome. It is found in the multivesicular body. Functionally, involved in the endosomal multivesicular bodies (MVB) pathway. MVBs contain intraluminal vesicles (ILVs) that are generated by invagination and scission from the limiting membrane of the endosome and are delivered to lysosomes enabling degradation of membrane proteins. Thought to be a cofactor of SKD1/VPS4, which catalyzes the disassembly of membrane-associated ESCRT-III. Target of pathogen-responsive mitogen-activated protein kinases (MPKs) that plays a critical role in plant basal resistance to Pseudomonas syringae in a SKD1-dependent manner by promoting multivesicular bodies (MVBs) trafficking upon plant infection. The sequence is that of Protein HOMOLOG OF MAMMALIAN LYST-INTERACTING PROTEIN 5 from Arabidopsis thaliana (Mouse-ear cress).